We begin with the raw amino-acid sequence, 219 residues long: Endonuclease V (219 aa).

2 residues coordinate Mg(2+): aspartate 41 and aspartate 107.

This sequence belongs to the endonuclease V family. Requires Mg(2+) as cofactor.

It is found in the cytoplasm. The catalysed reaction is Endonucleolytic cleavage at apurinic or apyrimidinic sites to products with a 5'-phosphate.. Functionally, DNA repair enzyme involved in the repair of deaminated bases. Selectively cleaves double-stranded DNA at the second phosphodiester bond 3' to a deoxyinosine leaving behind the intact lesion on the nicked DNA. This is Endonuclease V from Desulfurococcus amylolyticus (strain DSM 18924 / JCM 16383 / VKM B-2413 / 1221n) (Desulfurococcus kamchatkensis).